The primary structure comprises 199 residues: Small ribosomal subunit protein uS4 (199 aa).

In terms of domain architecture, S4 RNA-binding spans 94-157 (SRLDNIVYRM…QNVPTILASI (64 aa)).

Belongs to the universal ribosomal protein uS4 family. In terms of assembly, part of the 30S ribosomal subunit. Contacts protein S5. The interaction surface between S4 and S5 is involved in control of translational fidelity.

Its function is as follows. One of the primary rRNA binding proteins, it binds directly to 16S rRNA where it nucleates assembly of the body of the 30S subunit. With S5 and S12 plays an important role in translational accuracy. This chain is Small ribosomal subunit protein uS4, found in Mycoplasma mobile (strain ATCC 43663 / 163K / NCTC 11711) (Mesomycoplasma mobile).